The primary structure comprises 264 residues: Protein-L-isoaspartate O-methyltransferase (264 aa).

The segment at 1-49 (MRKPVGSKDGSGVYSRQGLDGYTPANSNTRISTATLPRPEPLRPAASSA) is disordered. Polar residues predominate over residues 24–35 (PANSNTRISTAT). S112 is an active-site residue.

This sequence belongs to the methyltransferase superfamily. L-isoaspartyl/D-aspartyl protein methyltransferase family.

The protein localises to the cytoplasm. The enzyme catalyses [protein]-L-isoaspartate + S-adenosyl-L-methionine = [protein]-L-isoaspartate alpha-methyl ester + S-adenosyl-L-homocysteine. Functionally, catalyzes the methyl esterification of L-isoaspartyl residues in peptides and proteins that result from spontaneous decomposition of normal L-aspartyl and L-asparaginyl residues. It plays a role in the repair and/or degradation of damaged proteins. This chain is Protein-L-isoaspartate O-methyltransferase, found in Bordetella avium (strain 197N).